Consider the following 138-residue polypeptide: Acidic phospholipase A2 Tbo-E6 (138 aa).

The N-terminal stretch at 1-16 (MRTLWILAVLLLGVKG) is a signal peptide. 7 disulfides stabilise this stretch: cysteine 42–cysteine 131, cysteine 44–cysteine 60, cysteine 59–cysteine 111, cysteine 65–cysteine 138, cysteine 66–cysteine 104, cysteine 73–cysteine 97, and cysteine 91–cysteine 102. Tyrosine 43, glycine 45, and glycine 47 together coordinate Ca(2+). Residue histidine 63 is part of the active site. Aspartate 64 provides a ligand contact to Ca(2+). Aspartate 105 is a catalytic residue.

As to quaternary structure, monomer. Ca(2+) serves as cofactor. In terms of tissue distribution, expressed by the venom gland.

The protein localises to the secreted. It catalyses the reaction a 1,2-diacyl-sn-glycero-3-phosphocholine + H2O = a 1-acyl-sn-glycero-3-phosphocholine + a fatty acid + H(+). In terms of biological role, snake venom phospholipase A2 (PLA2) that impairs hemostasis. It weakly inhibits ADP-induced platelet aggregation when tested on platelet rich plasma from human and rabbit blood (15-25% of inhibition at 5-10 ug of enzyme), and dose-dependently inhibits blood coagulation, possibly by inhibiting thrombin activation. Exhibits high hydrolytic activities toward L-dipalmitoyl phosphatidylcholine. PLA2 catalyzes the calcium-dependent hydrolysis of the 2-acyl groups in 3-sn-phosphoglycerides. The chain is Acidic phospholipase A2 Tbo-E6 from Craspedocephalus borneensis (Borneo pit viper).